The chain runs to 466 residues: IQ domain-containing protein C (466 aa).

Residues 6-35 (LVRKVSALQACVRGFLVRRQFQSLRAEYEA) enclose the IQ domain. 4 disordered regions span residues 105–157 (KSGE…PHSQ), 214–233 (EQAC…DQSY), 238–310 (TGEL…QTFG), and 394–466 (VLDL…EPPG). Over residues 132 to 153 (PSQEKTRDTTRMENPEATDQRL) the composition is skewed to basic and acidic residues. A compositionally biased stretch (polar residues) spans 282 to 293 (GPPSSIPSNSQA). Positions 297-306 (RLTKGPDDGR) are enriched in basic and acidic residues. S438 carries the phosphoserine modification.

The chain is IQ domain-containing protein C (IQCC) from Homo sapiens (Human).